The chain runs to 441 residues: ATP-dependent RNA helicase DBP8 (441 aa).

The Q motif signature appears at 1 to 29; it reads MSFEELGVSKWLSEALNSMKIHTPTTIQS. Residues 32-208 form the Helicase ATP-binding domain; the sequence is IPKILKGHDC…DRPVPKGKLP (177 aa). An ATP-binding site is contributed by 45–52; the sequence is AKTGSGKT. A DEAD box motif is present at residues 154-157; that stretch reads DEAD. The region spanning 247–387 is the Helicase C-terminal domain; that stretch reads NLPQYSDSLS…LIEDISDNKV (141 aa). The disordered stretch occupies residues 409–441; the sequence is ENFGEKRKINKSKRQANEGTISIHESKKKKHHK.

The protein belongs to the DEAD box helicase family. DDX49/DBP8 subfamily.

Its subcellular location is the nucleus. The protein localises to the nucleolus. It catalyses the reaction ATP + H2O = ADP + phosphate + H(+). Functionally, ATP-binding RNA helicase involved in 40S ribosomal subunit biogenesis and is required for the normal formation of 18S rRNAs through pre-rRNA processing at A0, A1 and A2 sites. Required for vegetative growth. The chain is ATP-dependent RNA helicase DBP8 (DBP8) from Debaryomyces hansenii (strain ATCC 36239 / CBS 767 / BCRC 21394 / JCM 1990 / NBRC 0083 / IGC 2968) (Yeast).